Reading from the N-terminus, the 278-residue chain is Bis(5'-nucleosyl)-tetraphosphatase, symmetrical (278 aa).

It belongs to the Ap4A hydrolase family.

The catalysed reaction is P(1),P(4)-bis(5'-adenosyl) tetraphosphate + H2O = 2 ADP + 2 H(+). Functionally, hydrolyzes diadenosine 5',5'''-P1,P4-tetraphosphate to yield ADP. This is Bis(5'-nucleosyl)-tetraphosphatase, symmetrical from Methylococcus capsulatus (strain ATCC 33009 / NCIMB 11132 / Bath).